The chain runs to 418 residues: Glutamyl-tRNA reductase (418 aa).

Residues 51 to 54 (TCNR), serine 107, 112 to 114 (EPQ), and glutamine 118 contribute to the substrate site. Cysteine 52 acts as the Nucleophile in catalysis. 187–192 (GAGETA) contributes to the NADP(+) binding site.

Belongs to the glutamyl-tRNA reductase family. Homodimer.

It catalyses the reaction (S)-4-amino-5-oxopentanoate + tRNA(Glu) + NADP(+) = L-glutamyl-tRNA(Glu) + NADPH + H(+). It participates in porphyrin-containing compound metabolism; protoporphyrin-IX biosynthesis; 5-aminolevulinate from L-glutamyl-tRNA(Glu): step 1/2. Its function is as follows. Catalyzes the NADPH-dependent reduction of glutamyl-tRNA(Glu) to glutamate 1-semialdehyde (GSA). This Dichelobacter nodosus (strain VCS1703A) protein is Glutamyl-tRNA reductase.